The chain runs to 124 residues: Small ribosomal subunit protein uS12 (124 aa).

D89 is modified (3-methylthioaspartic acid).

It belongs to the universal ribosomal protein uS12 family. As to quaternary structure, part of the 30S ribosomal subunit. Contacts proteins S8 and S17. May interact with IF1 in the 30S initiation complex.

With S4 and S5 plays an important role in translational accuracy. Functionally, interacts with and stabilizes bases of the 16S rRNA that are involved in tRNA selection in the A site and with the mRNA backbone. Located at the interface of the 30S and 50S subunits, it traverses the body of the 30S subunit contacting proteins on the other side and probably holding the rRNA structure together. The combined cluster of proteins S8, S12 and S17 appears to hold together the shoulder and platform of the 30S subunit. This Koribacter versatilis (strain Ellin345) protein is Small ribosomal subunit protein uS12.